The primary structure comprises 111 residues: Probable 4-amino-4-deoxy-L-arabinose-phosphoundecaprenol flippase subunit ArnE (111 aa).

Over 1 to 35 (MIWLTLVFASLLSVAGQLCQKQATCFAAVNKRRKH) the chain is Cytoplasmic. A helical membrane pass occupies residues 36–56 (IVLWLGLALACLGLAMVLWLL). An EamA domain is found at 40–109 (LGLALACLGL…IIGGIVILGS (70 aa)). At 57 to 60 (VLQN) the chain is on the periplasmic side. The chain crosses the membrane as a helical span at residues 61 to 81 (VPVGIAYPMLSLNFVWVTLAA). The Cytoplasmic segment spans residues 82–87 (VKLWHE). A helical membrane pass occupies residues 88–108 (PVSLRHWCGLAFIIGGIVILG). Over 109–111 (STV) the chain is Periplasmic.

It belongs to the ArnE family. In terms of assembly, heterodimer of ArnE and ArnF.

The protein localises to the cell inner membrane. Its pathway is bacterial outer membrane biogenesis; lipopolysaccharide biosynthesis. In terms of biological role, translocates 4-amino-4-deoxy-L-arabinose-phosphoundecaprenol (alpha-L-Ara4N-phosphoundecaprenol) from the cytoplasmic to the periplasmic side of the inner membrane. The protein is Probable 4-amino-4-deoxy-L-arabinose-phosphoundecaprenol flippase subunit ArnE of Escherichia coli O81 (strain ED1a).